A 330-amino-acid polypeptide reads, in one-letter code: uncharacterized protein (330 aa).

10 consecutive transmembrane segments (helical) span residues 27 to 47, 56 to 76, 90 to 110, 119 to 139, 147 to 167, 176 to 196, 206 to 226, 243 to 263, 270 to 290, and 294 to 314; these read MGAYVSLAAAMAIVGSSVVVG, VFLSSGLRFLIASVVLLMLLF, VFVLLVQSFTGVFLFSICLLY, ESGILTSTTPMLIGILSFFLL, TLIGILLAVCGVMAINLFGAG, LFGNMLIIAAVIGEALFTLMA, LAISTFVSLFGFLFFLPFALF, YVLYYALFVTVLAFYLWYSGV, VSGIFTSVLPVSAVILSGVIL, and FEFVHFIGIACVIGGIFVTVI. 2 consecutive EamA domains span residues 38–163 and 187–314; these read AIVG…AINL and IGEA…VTVI.

It belongs to the EamA transporter family.

It localises to the cell membrane. This is an uncharacterized protein from Bacillus subtilis (strain 168).